The chain runs to 122 residues: Large ribosomal subunit protein uL14 (122 aa).

This sequence belongs to the universal ribosomal protein uL14 family. As to quaternary structure, part of the 50S ribosomal subunit. Forms a cluster with proteins L3 and L19. In the 70S ribosome, L14 and L19 interact and together make contacts with the 16S rRNA in bridges B5 and B8.

In terms of biological role, binds to 23S rRNA. Forms part of two intersubunit bridges in the 70S ribosome. The chain is Large ribosomal subunit protein uL14 from Lactobacillus acidophilus (strain ATCC 700396 / NCK56 / N2 / NCFM).